Here is a 290-residue protein sequence, read N- to C-terminus: PIH1 domain-containing protein 1 (290 aa).

Phosphoserine is present on residues Ser12, Ser16, and Ser173.

The protein belongs to the PIH1 family. In terms of assembly, component of the R2TP complex composed at least of RUVBL1, RUVBL2, RPAP3 and PIHD1. Component of the PAQosome complex which is responsible for the biogenesis of several protein complexes and which consists of R2TP complex members RUVBL1, RUVBL2, RPAP3 and PIH1D1, URI complex members PFDN2, PFDN6, PDRG1, UXT and URI1 as well as ASDURF, POLR2E and DNAAF10/WDR92. Interacts with phosphorylated TELO2. Mediates interaction of TELO2 with the R2TP complex. Interacts with phosphorylated ECD, EFTUD2/SNRP116, RPB1 and UBR5 and with RPB1 in a phosphorylation-independent manner. Interacts with the core C/D box snoRNP particle components NOP58 and FBL and with RUVBL1/TIP49. Interacts with RPAP3 and DNAAF10. Interacts with histone H4 and with SWI/SNF complex member SMARCB1/SNF5. Interacts with the mTORC1 complex member RPTOR. Interacts with isoform 1 of MSL1.

The protein resides in the nucleus. Its function is as follows. Involved in the assembly of C/D box small nucleolar ribonucleoprotein (snoRNP) particles. Recruits the SWI/SNF complex to the core promoter of rRNA genes and enhances pre-rRNA transcription. Mediates interaction of TELO2 with the R2TP complex which is necessary for the stability of MTOR and SMG1. Positively regulates the assembly and activity of the mTORC1 complex. The protein is PIH1 domain-containing protein 1 (Pih1d1) of Mus musculus (Mouse).